A 257-amino-acid polypeptide reads, in one-letter code: MAANFWTSSHCKQLLDQEDVDKVPQADSDRGITLEEFRLVKIHMSFHIWRLAQQVKVRQRVIATAVTYFRRVYTRKSMTEYDPRLVAPTCLYLASKVEESTVQARLLVFYIKKMCASDEKYRFEIKDILEMEMKLLEALDYYLVVYHPYRPLLQLLQDAGITDLTQFAWGIVNDTYKMDLILIHPPYMIALACIYIASVLKDKDITLWFEELRVDMNIVKNISMEILDFYDTYKIDPQRGLPEDKIAPVMNKLPSKA.

The protein belongs to the cyclin family. Cyclin C subfamily.

The sequence is that of Cyclin-C1-1 from Oryza sativa subsp. japonica (Rice).